A 346-amino-acid chain; its full sequence is Methylthioribose-1-phosphate isomerase (346 aa).

Substrate is bound by residues 48 to 50 (RGA), R91, and Q196. D237 (proton donor) is an active-site residue. 247–248 (NK) is a binding site for substrate.

Belongs to the eIF-2B alpha/beta/delta subunits family. MtnA subfamily.

It carries out the reaction 5-(methylsulfanyl)-alpha-D-ribose 1-phosphate = 5-(methylsulfanyl)-D-ribulose 1-phosphate. It functions in the pathway amino-acid biosynthesis; L-methionine biosynthesis via salvage pathway; L-methionine from S-methyl-5-thio-alpha-D-ribose 1-phosphate: step 1/6. Functionally, catalyzes the interconversion of methylthioribose-1-phosphate (MTR-1-P) into methylthioribulose-1-phosphate (MTRu-1-P). In Thermosipho melanesiensis (strain DSM 12029 / CIP 104789 / BI429), this protein is Methylthioribose-1-phosphate isomerase.